A 224-amino-acid polypeptide reads, in one-letter code: Urease accessory protein UreF (224 aa).

Belongs to the UreF family. As to quaternary structure, ureD, UreF and UreG form a complex that acts as a GTP-hydrolysis-dependent molecular chaperone, activating the urease apoprotein by helping to assemble the nickel containing metallocenter of UreC. The UreE protein probably delivers the nickel.

The protein localises to the cytoplasm. Its function is as follows. Required for maturation of urease via the functional incorporation of the urease nickel metallocenter. In Pseudomonas putida (strain GB-1), this protein is Urease accessory protein UreF.